A 259-amino-acid polypeptide reads, in one-letter code: Protein unc-50 homolog (259 aa).

N-acetylmethionine is present on Met-1. The Cytoplasmic portion of the chain corresponds to 1 to 82; sequence MLPSTSVNSL…TKDQWARDDP (82 aa). Ser-6 carries the phosphoserine modification. The chain crosses the membrane as a helical span at residues 83 to 103; sequence AFLVLLSIWLCVSTIGFGFVL. Topologically, residues 104–115 are lumenal; that stretch reads DMGFFETIKLLL. Residues 116–136 form a helical membrane-spanning segment; it reads WVVLIDCVGVGLLIATLMWFI. The Cytoplasmic portion of the chain corresponds to 137–163; that stretch reads SNKYLVKRQSRDYDVEWGYAFDVHLNA. Residues 164 to 184 form a helical membrane-spanning segment; the sequence is FYPLLVILHFIQLFFINHVIL. Residues 185–187 lie on the Lumenal side of the membrane; it reads TDT. Residues 188-208 traverse the membrane as a helical segment; it reads FIGYLVGNTLWLVAVGYYIYV. At 209 to 222 the chain is on the cytoplasmic side; the sequence is TFLGYSALPFLKNT. Residues 223-243 form a helical membrane-spanning segment; the sequence is VILLYPFAPLILLYGLSLALG. Over 244–259 the chain is Lumenal; that stretch reads WNFTHTLCSFYKYRVK.

The protein belongs to the unc-50 family. In terms of tissue distribution, present in periodontal ligament fibroblasts (at protein level).

The protein localises to the nucleus inner membrane. It is found in the golgi apparatus membrane. Its function is as follows. Involved in the cell surface expression of neuronal nicotinic receptors. Binds RNA. The sequence is that of Protein unc-50 homolog (UNC50) from Homo sapiens (Human).